The sequence spans 597 residues: Histidine protein kinase DivJ (597 aa).

The next 6 helical transmembrane spans lie at 40-57, 62-81, 91-109, 110-125, 137-158, and 159-188; these read LGWLAAVCLAAAAALFTA, WPVWAALGAGALPALVSLIF, WLLVLWAVGGSLAAVLTGG, VGGAMAAWCLAPVAAA, GAALALIGACVAALTQLSGLAP, and AAPTGPLAFVLGFLALVTTGLGLAAGLLIG. The 219-residue stretch at 335-553 folds into the Histidine kinase domain; the sequence is NMSHELRTPL…TVSVRLPVLL (219 aa). Position 338 is a phosphohistidine; by autocatalysis (H338). Pro residues predominate over residues 561–585; the sequence is PTPPAAPEAPSAPEPAPTVEEPPPA. The disordered stretch occupies residues 561-597; the sequence is PTPPAAPEAPSAPEPAPTVEEPPPASLGDNVIAFAPR.

It localises to the cell membrane. The enzyme catalyses ATP + protein L-histidine = ADP + protein N-phospho-L-histidine.. Functionally, kinase required for the regulation of cell division and differentiation. Is part of a signal transduction pathway, activating PleD by phosphorylation. The protein is Histidine protein kinase DivJ (divJ) of Caulobacter vibrioides (strain ATCC 19089 / CIP 103742 / CB 15) (Caulobacter crescentus).